Here is a 340-residue protein sequence, read N- to C-terminus: Glyceraldehyde-3-phosphate dehydrogenase, cytosolic (340 aa).

NAD(+) contacts are provided by residues 16-17 (RI), Asp38, and Arg85. Residues 156 to 158 (SCT), Thr187, 216 to 217 (TG), and Arg239 contribute to the D-glyceraldehyde 3-phosphate site. The active-site Nucleophile is the Cys157. Asn321 provides a ligand contact to NAD(+).

Belongs to the glyceraldehyde-3-phosphate dehydrogenase family. Homotetramer.

It is found in the cytoplasm. The catalysed reaction is D-glyceraldehyde 3-phosphate + phosphate + NAD(+) = (2R)-3-phospho-glyceroyl phosphate + NADH + H(+). It participates in carbohydrate degradation; glycolysis; pyruvate from D-glyceraldehyde 3-phosphate: step 1/5. In terms of biological role, key enzyme in glycolysis that catalyzes the first step of the pathway by converting D-glyceraldehyde 3-phosphate (G3P) into 3-phospho-D-glyceroyl phosphate. Essential for the maintenance of cellular ATP levels and carbohydrate metabolism. This is Glyceraldehyde-3-phosphate dehydrogenase, cytosolic from Ginkgo biloba (Ginkgo).